Reading from the N-terminus, the 4473-residue chain is Plectin (4473 aa).

Calponin-homology (CH) domains follow at residues 1-74 (DGHN…LHFQ) and 87-192 (MTAK…DAMP). Positions 1–192 (DGHNLISLLE…YVSSLYDAMP (192 aa)) are actin-binding. Residues 1 to 1259 (DGHNLISLLE…SELTTLTSQY (1259 aa)) are globular 1. One copy of the Spectrin 1 repeat lies at 449–508 (RYLQDLLAWVEENQRRIDSAEWGVDLPSVEAQLGSHRGMHQSIEEFRAKIERARNDESQL). Residue serine 509 is modified to Phosphoserine. Spectrin repeat units follow at residues 529–613 (KLLN…REDH) and 626–719 (LQTQ…AIVQ). Threonine 604 is subject to Phosphothreonine. In terms of domain architecture, SH3 spans 730–787 (RGHVPLMAVCDYKQVEVTVHKGDQCQLVGPAQPSHWKVLRGPSSEAAVPSVCFLVPPP). Serine 836 is modified (phosphoserine). Residues 1104–1204 (RERVNQLLER…QKFAKQYINA (101 aa)) form a Spectrin 4 repeat. Serine 1224 bears the Phosphoserine mark. Positions 1258-2548 (QYIKFISETL…EEIAATQAAA (1291 aa)) form a coiled coil. A central fibrous rod domain region spans residues 1260–2544 (IKFISETLRR…LAHSEEIAAT (1285 aa)). Disordered regions lie at residues 1274–1293 (ERLA…EGEA) and 1407–1434 (RAEE…DESQ). The residue at position 1510 (serine 1510) is a Phosphoserine. Lysine 1514 is subject to N6-acetyllysine. Disordered stretches follow at residues 1529 to 1550 (VTQL…ERAR), 1582 to 1616 (SLAQ…RELA), 1881 to 1929 (AEDT…AARQ), 1950 to 1971 (LRER…AAQK), and 2003 to 2098 (ERLR…KHKK). 3 stretches are compositionally biased toward basic and acidic residues: residues 1587-1616 (DAEK…RELA), 1881-1897 (AEDT…EAAR), and 1905-1917 (EEQR…ERVQ). The span at 1959–1968 (ARQLQLAQEA) shows a compositional bias: low complexity. Basic and acidic residues predominate over residues 2003-2047 (ERLRGEAEAARRAAEEAEEAREQAEREAAQSRKQVEEAERLKQSA). Residues 2048 to 2061 (EEQAQARAQAQAAA) are compositionally biased toward low complexity. The span at 2062-2077 (EKLRKEAEQEAARRAQ) shows a compositional bias: basic and acidic residues. The residue at position 2420 (serine 2420) is a Phosphoserine. Lysine 2425 bears the N6-acetyllysine mark. Residues 2457-2476 (REEQQRQQRQMEQEKQELVA) are disordered. Residues 2545–4473 (QAAAAKALPN…SLGGPESAVA (1929 aa)) are globular 2. Residues serine 2563 and serine 2591 each carry the phosphoserine modification. Plectin repeat units lie at residues 2615-2652 (RQYL…PGTA), 2653-2690 (LILL…PELH), 2691-2728 (HKLL…RDHA), 2729-2766 (IRLL…EEMS), and 2770-2804 (ADPG…PETG). Phosphothreonine is present on threonine 2675. Tyrosine 2822 is subject to Phosphotyrosine. Residues lysine 2842 and lysine 2880 each carry the N6-acetyllysine modification. 5 Plectin repeats span residues 2905–2942 (ALVP…ADSV), 2943–2980 (RRAL…PDVA), 2981–3018 (VALL…PELH), 3019–3056 (EKLL…REQG), and 3057–3094 (LRLL…KETN). Tyrosine 3151 carries the phosphotyrosine modification. Position 3209 is an N6-acetyllysine (lysine 3209). 5 Plectin repeats span residues 3274-3311 (RTLL…PSTA), 3312-3349 (TLLL…PELH), 3350-3387 (EKLL…REHA), 3388-3425 (IRLL…EEMS), and 3429-3463 (ADPS…PETG). A Phosphothreonine modification is found at threonine 3574. The residue at position 3579 (tyrosine 3579) is a Phosphotyrosine. Plectin repeat units lie at residues 3609–3646 (WRYL…AEVA), 3647–3684 (RLLL…PELH), 3685–3722 (DRLL…AEEA), 3723–3760 (LRLL…KDTH), 3764–3797 (SEPS…DGSG), and 3800–3834 (LLPL…EATA). Threonine 3819 is modified (phosphothreonine). Residue serine 3843 is modified to Phosphoserine. Plectin repeat units follow at residues 3852–3889 (QKFL…PGTA), 3890–3927 (FELL…PEFK), 3928–3965 (DRLL…KDHG), 3966–4003 (IRLL…EEMN), 4007–4041 (TDPS…PQTG), and 4043–4094 (RLLP…HQTY). Residues 4039 to 4089 (QTGLRLLPLKEKKRERKTSSKSSVRKRRVVIVDPETSKEMSVYEAYRKGLI) form a binding to intermediate filaments region. Phosphoserine is present on residues serine 4171, serine 4173, serine 4174, serine 4175, serine 4178, serine 4179, serine 4180, and serine 4181. At tyrosine 4182 the chain carries Phosphotyrosine. Phosphoserine occurs at positions 4185, 4189, and 4195. 5 Plectin repeats span residues 4197-4234 (SDPT…NITG), 4235-4272 (QRLL…KIMV), 4273-4310 (DRIN…YEAG), 4311-4348 (QRFL…ARTA), and 4349-4386 (QKLR…EGTG). Phosphothreonine is present on threonine 4200. At threonine 4328 the chain carries Phosphothreonine; by CDK1. 2 positions are modified to phosphoserine: serine 4396 and serine 4402. Residues 4400–4460 (YYSPYSVSGS…SGYGRRYASG (61 aa)) show a composition bias toward low complexity. Positions 4400 to 4473 (YYSPYSVSGS…SLGGPESAVA (74 aa)) are disordered. Phosphotyrosine is present on tyrosine 4404. 3 positions are modified to phosphoserine: serine 4405, serine 4407, and serine 4411. Threonine 4412 is subject to Phosphothreonine. The interval 4414–4429 (GSRTGSRTGSRAGSRR) is 4 X 4 AA tandem repeats of G-S-R-X. Phosphoserine is present on serine 4415. Residues arginine 4416 and arginine 4429 each carry the omega-N-methylarginine modification. Residues serine 4431 and serine 4464 each carry the phosphoserine modification.

The protein belongs to the plakin or cytolinker family. Homodimer or homotetramer. Interacts (via actin-binding domain) with SYNE3. Interacts (via calponin-homology (CH) 1 domain) with VIM (via rod region). Interacts (via N-terminus) with DST isoform 2 (via N-terminus). Interacts with FER. Interacts with TOR1A. Interacts with ANK3. Identified in complexes that contain VIM, EZR, AHNAK, BFSP1, BFSP2, ANK2, PLEC, PRX and spectrin. In terms of processing, phosphorylated by CDK1; regulates dissociation from intermediate filaments during mitosis.

The protein localises to the cytoplasm. The protein resides in the cytoskeleton. It is found in the cell junction. It localises to the hemidesmosome. Its subcellular location is the cell projection. The protein localises to the podosome. Its function is as follows. Interlinks intermediate filaments with microtubules and microfilaments and anchors intermediate filaments to desmosomes or hemidesmosomes. May be involved not only in the cross-linking and stabilization of cytoskeletal intermediate filaments network, but also in the regulation of their dynamics. In Cricetulus griseus (Chinese hamster), this protein is Plectin (PLEC).